The primary structure comprises 605 residues: DNA mismatch repair protein MutL (605 aa).

It belongs to the DNA mismatch repair MutL/HexB family.

In terms of biological role, this protein is involved in the repair of mismatches in DNA. It is required for dam-dependent methyl-directed DNA mismatch repair. May act as a 'molecular matchmaker', a protein that promotes the formation of a stable complex between two or more DNA-binding proteins in an ATP-dependent manner without itself being part of a final effector complex. The protein is DNA mismatch repair protein MutL of Methylocella silvestris (strain DSM 15510 / CIP 108128 / LMG 27833 / NCIMB 13906 / BL2).